The following is a 332-amino-acid chain: Iron-utilization periplasmic protein (332 aa).

The first 23 residues, 1 to 23 (MQFKHFKLATLAAALAFSANSFA), serve as a signal peptide directing secretion. Fe cation contacts are provided by His-32, Glu-80, Tyr-218, and Tyr-219.

The protein belongs to the bacterial solute-binding protein 1 family. As to quaternary structure, the complex is composed of two ATP-binding proteins (FbpC), two transmembrane proteins (FbpB) and a solute-binding protein (FbpA).

The protein resides in the periplasm. Functionally, part of the ABC transporter complex FbpABC (TC 3.A.1.10.1) involved in Fe(3+) ions import. This protein specifically binds Fe(3+) and is involved in its transmembrane transport. In Haemophilus influenzae (strain ATCC 51907 / DSM 11121 / KW20 / Rd), this protein is Iron-utilization periplasmic protein (fbpA).